The primary structure comprises 500 residues: Pyridine nucleotide-disulfide oxidoreductase domain-containing protein 1 (500 aa).

Methionine 1 bears the N-acetylmethionine mark. The interval 211-235 (TRYTTEGRKKEARSKSKADNVGSAL) is disordered. A compositionally biased stretch (basic and acidic residues) spans 213 to 228 (YTTEGRKKEARSKSKA).

This sequence belongs to the class-I pyridine nucleotide-disulfide oxidoreductase family. PYROXD1 subfamily. The cofactor is FAD.

The protein resides in the nucleus. Its subcellular location is the cytoplasm. It localises to the myofibril. It is found in the sarcomere. Its function is as follows. Probable FAD-dependent oxidoreductase; involved in the cellular oxidative stress response. Required for normal sarcomere structure and muscle fiber integrity. This is Pyridine nucleotide-disulfide oxidoreductase domain-containing protein 1 (PYROXD1) from Homo sapiens (Human).